The following is a 137-amino-acid chain: Cytochrome c-type biogenesis protein CcmE (137 aa).

The Cytoplasmic portion of the chain corresponds to methionine 1–arginine 8. Residues leucine 9–asparagine 29 traverse the membrane as a helical; Signal-anchor for type II membrane protein segment. The Periplasmic segment spans residues leucine 30 to isoleucine 137. 2 residues coordinate heme: histidine 120 and tyrosine 124.

This sequence belongs to the CcmE/CycJ family.

The protein localises to the cell inner membrane. Heme chaperone required for the biogenesis of c-type cytochromes. Transiently binds heme delivered by CcmC and transfers the heme to apo-cytochromes in a process facilitated by CcmF and CcmH. This chain is Cytochrome c-type biogenesis protein CcmE, found in Rickettsia bellii (strain OSU 85-389).